Reading from the N-terminus, the 417-residue chain is Oxidoreductase phnG (417 aa).

Residues 16–20, Arg61, and Asp317 contribute to the 6-hydroxy-FAD site; that span reads GGSYA.

The protein belongs to the FAD-dependent oxidoreductase family. It depends on 6-hydroxy-FAD as a cofactor.

It carries out the reaction deoxyherqueinone + NADPH + O2 + H(+) = herqueinone + NADP(+) + H2O. The protein operates within secondary metabolite biosynthesis. Its function is as follows. Oxidoreductase; part of the gene cluster that mediates the biosynthesis of phenalenones such as herqueinone, compounds that have been reported to treat tumors, bacterial infections and/or mycoses, and rheumatic diseases. The non-reducing polyketide synthase phnA synthesizes the heptaketide backbone and cyclizes it into the angular, hemiketal-containing naphtho-gamma-pyrone prephenalenone. The product template (PT) domain of phnA catalyzes only the C4-C9 aldol condensation, which is unprecedented among known PT domains. The transformation of prephenalenone to phenalenones requires an FAD-dependent monooxygenase phnB, which catalyzes the C2 aromatic hydroxylation of prephenalenone and ring opening of the gamma-pyrone ring simultaneously. Subsequent intramolecular deprotonation of C3 phenolic oxygen accelerates phenalenone ring closure to yield the tricyclic phenalenone core with a C2 hydroxylation. The prenyltransferase phnF further catalyzes reverse C-prenylation of phenalenone by direct electrophilic substitution at C6, or possibly via first a forward O-prenylation of a neighboring phenol in phenalenone, followed by a Claisen rearrangement. The hydroalkoxylation enzyme phnH catalyzes the 5-exo-trig cyclization via acid catalysis after the spontaneous deprotonation of 7-OH, which leads to the formation of the dihydrobenzofuran atrovenetin. Atrovenetin is further converted to deoxyherqueinone by the O-methyltransferase phnC which can methylate C2-OH to stabilize the northern portion of the phenalenone core. Finally, the oxidoreductase phnG converts deoxyherqueinone to herqueinone via C6 hydroxylation. This Penicillium herquei protein is Oxidoreductase phnG.